Here is a 226-residue protein sequence, read N- to C-terminus: Phosphoglycolate phosphatase (226 aa).

Asp-5 (nucleophile) is an active-site residue. The Mg(2+) site is built by Asp-5 and Asp-7. Lys-142 serves as a coordination point for substrate. Mg(2+)-binding residues include Asp-164 and Asp-168.

This sequence belongs to the archaeal SPP-like hydrolase family. Requires Mg(2+) as cofactor.

It carries out the reaction 2-phosphoglycolate + H2O = glycolate + phosphate. Functionally, catalyzes the dephosphorylation of 2-phosphoglycolate. This Sulfurisphaera tokodaii (strain DSM 16993 / JCM 10545 / NBRC 100140 / 7) (Sulfolobus tokodaii) protein is Phosphoglycolate phosphatase.